The chain runs to 1178 residues: DNA-directed RNA polymerase subunit beta' (1178 aa).

The Zn(2+) site is built by Cys60, Cys62, Cys75, and Cys78. 3 residues coordinate Mg(2+): Asp450, Asp452, and Asp454. 4 residues coordinate Zn(2+): Cys795, Cys869, Cys876, and Cys879.

It belongs to the RNA polymerase beta' chain family. In terms of assembly, the RNAP catalytic core consists of 2 alpha, 1 beta, 1 beta' and 1 omega subunit. When a sigma factor is associated with the core the holoenzyme is formed, which can initiate transcription. The cofactor is Mg(2+). Requires Zn(2+) as cofactor.

The catalysed reaction is RNA(n) + a ribonucleoside 5'-triphosphate = RNA(n+1) + diphosphate. Functionally, DNA-dependent RNA polymerase catalyzes the transcription of DNA into RNA using the four ribonucleoside triphosphates as substrates. This chain is DNA-directed RNA polymerase subunit beta', found in Clostridium botulinum (strain Okra / Type B1).